The primary structure comprises 332 residues: Putative potassium channel regulatory protein sup-10 (332 aa).

An N-terminal signal peptide occupies residues 1 to 18; sequence MRYAVFIFLIVLIDLIYC. Topologically, residues 19–301 are extracellular; the sequence is WNSKRSFFIP…EISERNKRPA (283 aa). N-linked (GlcNAc...) asparagine glycans are attached at residues Asn-61, Asn-107, and Asn-166. Residues 302-322 form a helical membrane-spanning segment; the sequence is FVLVGLTGGIAVIILAFSIFW. Over 323 to 332 the chain is Cytoplasmic; the sequence is GLNGSGFNKD.

In terms of assembly, may form a complex with sup-9 and unc-93 where sup-10 and unc-93 act as regulatory subunits of the two pore potassium channel sup-9. Sup-10 may regulate sup-9 via sup-18. Low levels in body-wall muscles, eight vulval muscles, intestinal muscles and anal depressor muscle.

The protein resides in the membrane. Its function is as follows. May contribute to coordination of muscle contraction as regulatory subunit of a nonessential potassium channel complex. The sequence is that of Putative potassium channel regulatory protein sup-10 from Caenorhabditis elegans.